A 413-amino-acid chain; its full sequence is Envelope glycoprotein M (413 aa).

Residues 1 to 19 (MGNYYYGGQESRLERISWR) lie on the Intravirion side of the membrane. Residues 20 to 40 (MWMVEAACYIVLVLLTLVSSF) traverse the membrane as a helical segment. The Virion surface portion of the chain corresponds to 41-88 (ASLSSTTGFPCFVGTVGESSFGGDLMGHGMTPARRDGVKIFFMSSPST). Residues 89–109 (LFVVFSAVFVWLVVAVYLLLG) form a helical membrane-spanning segment. Residues 110–133 (GVRVKMCNFDSSYGASELSSAVAT) lie on the Intravirion side of the membrane. Residues 134–154 (MTSLVTLSITAWAWQVFVLML) traverse the membrane as a helical segment. At 155-160 (SYRQLT) the chain is on the virion surface side. Residues 161-181 (LAAVAFVGIFIAGLVFMLSFA) traverse the membrane as a helical segment. Residues 182-218 (SGGKSPENYATFNSQLKTVCKDVHAVITAFKAVVLNL) lie on the Intravirion side of the membrane. The chain crosses the membrane as a helical span at residues 219–239 (FCVVFGVWHLMLVMLGAVIMV). Topologically, residues 240-251 (LNFGVSIPKATT) are virion surface. Residues 252 to 272 (GALVVFIVLGLVYLMMIELVV) form a helical membrane-spanning segment. The Intravirion segment spans residues 273–277 (SRYVH). A helical membrane pass occupies residues 278 to 298 (VLLGPHLGMIIALGIAGTSAL). Over 299–312 (SYAETLDEIMYASW) the chain is Virion surface. Residues 313–333 (KPVAAGILGAFSVIVLALAVL) traverse the membrane as a helical segment. The Intravirion portion of the chain corresponds to 334-413 (RAVRSYKFHK…EDVIYENMKY (80 aa)).

The protein belongs to the herpesviridae glycoprotein M family. As to quaternary structure, interacts (via N-terminus) with gN (via N-terminus). The gM-gN heterodimer forms the gCII complex.

The protein localises to the virion membrane. Its subcellular location is the host Golgi apparatus. The protein resides in the host trans-Golgi network. It localises to the host endosome membrane. It is found in the host nucleus inner membrane. In terms of biological role, envelope glycoprotein important for virion assembly and egress. Plays a role in the correct incorporation of gH-gL into virion membrane. Directs the glycoprotein N (gN) to the host trans-Golgi network. This Psittacid herpesvirus 1 (isolate Amazon parrot/-/97-0001/1997) (PsHV-1) protein is Envelope glycoprotein M.